The primary structure comprises 702 residues: Phosphoglycerol transferase I (702 aa).

3 consecutive transmembrane segments (helical) span residues 2–22, 71–91, and 103–123; these read HWMLLVSLLLLLWLLVASPRL, FSGYIAVFVGMLLLSLSPLLL, and GGAVFAGFVGMLLVGIAASPL.

Belongs to the OpgB family.

The protein resides in the cell inner membrane. The enzyme catalyses a phosphatidylglycerol + a membrane-derived-oligosaccharide D-glucose = a 1,2-diacyl-sn-glycerol + a membrane-derived-oligosaccharide 6-(glycerophospho)-D-glucose.. Its pathway is glycan metabolism; osmoregulated periplasmic glucan (OPG) biosynthesis. Functionally, transfers a phosphoglycerol residue from phosphatidylglycerol to the membrane-bound nascent glucan backbones. This chain is Phosphoglycerol transferase I, found in Xanthomonas euvesicatoria pv. vesicatoria (strain 85-10) (Xanthomonas campestris pv. vesicatoria).